The sequence spans 66 residues: Cytochrome c oxidase subunit 26, mitochondrial (66 aa).

The transit peptide at 1–8 (MFFSQVLR) directs the protein to the mitochondrion. The Mitochondrial matrix segment spans residues 9–27 (SSARAAPIKRYTGGRIGES). A helical membrane pass occupies residues 28–64 (WVITEGRRLIPEIFQWSAVLSVCLGWPGAVYFFSKAR). At 65–66 (KA) the chain is on the mitochondrial intermembrane side.

The protein belongs to the fungal cytochrome c oxidase subunit 26 family. In terms of assembly, component of the cytochrome c oxidase (complex IV, CIV), a multisubunit enzyme composed of 12 subunits. The complex is composed of a catalytic core of 3 subunits COX1, COX2 and COX3, encoded in the mitochondrial DNA, and 9 supernumerary subunits COX4, COX5A (or COX5B), COX6, COX7, COX8, COX9, COX12, COX13 and COX26, which are encoded in the nuclear genome. The complex exists as a monomer or a dimer and forms supercomplexes (SCs) in the inner mitochondrial membrane with a dimer of ubiquinol-cytochrome c oxidoreductase (cytochrome b-c1 complex, complex III, CIII), resulting in 2 different assemblies (supercomplexes III(2)IV and III(2)IV(2)).

The protein resides in the mitochondrion inner membrane. Component of the cytochrome c oxidase, the last enzyme in the mitochondrial electron transport chain which drives oxidative phosphorylation. The respiratory chain contains 3 multisubunit complexes succinate dehydrogenase (complex II, CII), ubiquinol-cytochrome c oxidoreductase (cytochrome b-c1 complex, complex III, CIII) and cytochrome c oxidase (complex IV, CIV), that cooperate to transfer electrons derived from NADH and succinate to molecular oxygen, creating an electrochemical gradient over the inner membrane that drives transmembrane transport and the ATP synthase. Cytochrome c oxidase is the component of the respiratory chain that catalyzes the reduction of oxygen to water. Electrons originating from reduced cytochrome c in the intermembrane space (IMS) are transferred via the dinuclear copper A center (CU(A)) of COX2 and heme A of COX1 to the active site in COX1, a binuclear center (BNC) formed by heme A3 and copper B (CU(B)). The BNC reduces molecular oxygen to 2 water molecules using 4 electrons from cytochrome c in the IMS and 4 protons from the mitochondrial matrix. This is Cytochrome c oxidase subunit 26, mitochondrial (COX26) from Saccharomyces cerevisiae (strain ATCC 204508 / S288c) (Baker's yeast).